The sequence spans 663 residues: Alpha-1,4-glucan:maltose-1-phosphate maltosyltransferase (663 aa).

The interval 238–266 is disordered; the sequence is IGETNRKGPDDAPEAGPDDPGSPWAIGGF. The alpha-maltose 1-phosphate site is built by K244, Q309, and D344. D380 (nucleophile) is an active-site residue. N381 provides a ligand contact to alpha-maltose 1-phosphate. E409 (proton donor) is an active-site residue. 521-522 contributes to the alpha-maltose 1-phosphate binding site; it reads KY.

The protein belongs to the glycosyl hydrolase 13 family. GlgE subfamily. In terms of assembly, homodimer.

It carries out the reaction alpha-maltose 1-phosphate + [(1-&gt;4)-alpha-D-glucosyl](n) = [(1-&gt;4)-alpha-D-glucosyl](n+2) + phosphate. Its function is as follows. Maltosyltransferase that uses maltose 1-phosphate (M1P) as the sugar donor to elongate linear or branched alpha-(1-&gt;4)-glucans. Is involved in a branched alpha-glucan biosynthetic pathway from trehalose, together with TreS, Mak and GlgB. This chain is Alpha-1,4-glucan:maltose-1-phosphate maltosyltransferase, found in Salinibacter ruber (strain DSM 13855 / M31).